Reading from the N-terminus, the 407-residue chain is MAPVAGKKAKKGILERLNAGEVVIGDGGFVFALEKRGYVKAGPWTPEAAVEHPEAVRQLHREFLRAGSNVMQTFTFYASEDKLENRGNYVAEKISGQKVNEAACDIARQVADEGDALVAGGVSQTPSYLSCKSEVEVKKIFRQQLEVFMKKNVDFLIAEYFEHVEEAVWAVEALKASGKPVAATMCIGPEGDLHGVPPGECAVRLVKAGASIVGVNCHFDPSVSLQTVKLMKEGLEAARLKAYLMSQPLAYHTPDCGKQGFIDLPEFPFGLEPRVATRWDIQKYAREAYNLGVRYIGGCCGFEPYHIRAIAEELAPERGFLPPASEKHGSWGSGLDMHTKPWIRARARKEYWQNLRIASGRPYNPSMSRPDAWGVTKGAAELMQQKEATTEQQLRELFEKQKFKSAQ.

In terms of domain architecture, Hcy-binding spans 11–314 (KGILERLNAG…YHIRAIAEEL (304 aa)). 3 positions are modified to N6-succinyllysine: Lys-40, Lys-93, and Lys-98. Cys-217 contributes to the Zn(2+) binding site. N6-succinyllysine occurs at positions 232 and 241. The Zn(2+) site is built by Cys-299 and Cys-300. At Ser-330 the chain carries Phosphoserine. Residues Lys-340 and Lys-377 each carry the N6-succinyllysine modification.

Homotetramer. Zn(2+) is required as a cofactor.

It localises to the cytoplasm. It is found in the cytosol. The protein resides in the nucleus. The catalysed reaction is L-homocysteine + glycine betaine = N,N-dimethylglycine + L-methionine. It participates in amine and polyamine degradation; betaine degradation; sarcosine from betaine: step 1/2. Its pathway is amino-acid biosynthesis; L-methionine biosynthesis via de novo pathway; L-methionine from L-homocysteine (BhmT route): step 1/1. Functionally, involved in the regulation of homocysteine metabolism. Converts betaine and homocysteine to dimethylglycine and methionine, respectively. This reaction is also required for the irreversible oxidation of choline. The sequence is that of Betaine--homocysteine S-methyltransferase 1 (Bhmt) from Mus musculus (Mouse).